Reading from the N-terminus, the 370-residue chain is DNA primase large subunit PriL (370 aa).

[4Fe-4S] cluster contacts are provided by Cys230, Cys301, Cys310, and Cys317. Residues Glu337–Lys370 form a disordered region.

The protein belongs to the eukaryotic-type primase large subunit family. As to quaternary structure, heterodimer of a small subunit (PriS) and a large subunit (PriL). It depends on [4Fe-4S] cluster as a cofactor.

Regulatory subunit of DNA primase, an RNA polymerase that catalyzes the synthesis of short RNA molecules used as primers for DNA polymerase during DNA replication. Stabilizes and modulates the activity of the small subunit, increasing the rate of DNA synthesis, and conferring RNA synthesis capability. The DNA polymerase activity may enable DNA primase to also catalyze primer extension after primer synthesis. May also play a role in DNA repair. The chain is DNA primase large subunit PriL from Methanosarcina mazei (strain ATCC BAA-159 / DSM 3647 / Goe1 / Go1 / JCM 11833 / OCM 88) (Methanosarcina frisia).